The chain runs to 459 residues: MPDTLLDPTTLGDLLRVASAPDYARWEDQIRRTGAGANPIHLTGWTLHKDKTTGETLHHYTTAVEPGGRLRLACGNRRASRCPSCAWTYAGDTYHLIRAGLAGDDRRDIPATVRDHPRVFATLTAPSFGPVHNRPDHGTCRCGTRHAPDAPELGAALDPTTYDYAGAVLFNNHAGQLWQRFTTRLRREIAARAGLSRRELPDCLRVSYGKVAEFQKRGALHFHAVIRLDGPEGPDTTPPAWATVALLADAIRAAAAHSYTSVSVPAAEDQPARTFRWGTQLDVRPVKAFGDGSDITEQAVASYVAKYATKAAENTGTLDRRIGELSELDRHDVPDHTRRLVEACKMLDPLYPERRLWAWAHMLGFRGHFSSKSRRYSTTLGALRQARADYRAAQEHAALALDDREPDTVLVLADWQYAGHGHTPGESVLAATIARNLQLNRETAREAVRDQLDQEGVAA.

In terms of biological role, essential for pSAM2 replication. The sequence is that of Replication initiator protein (repSA) from Streptomyces ambofaciens.